A 93-amino-acid chain; its full sequence is Small integral membrane protein 36 (93 aa).

A helical transmembrane segment spans residues 14–34 (LIILVASYVILLLVFLVSCVL). The tract at residues 70–93 (SHWARGPSLHLKDPAPLGKKSTVV) is disordered.

The protein localises to the membrane. This is Small integral membrane protein 36 from Mus musculus (Mouse).